A 251-amino-acid polypeptide reads, in one-letter code: Segregation and condensation protein A (251 aa).

The protein belongs to the ScpA family. Component of a cohesin-like complex composed of ScpA, ScpB and the Smc homodimer, in which ScpA and ScpB bind to the head domain of Smc. The presence of the three proteins is required for the association of the complex with DNA.

The protein resides in the cytoplasm. In terms of biological role, participates in chromosomal partition during cell division. May act via the formation of a condensin-like complex containing Smc and ScpB that pull DNA away from mid-cell into both cell halves. The polypeptide is Segregation and condensation protein A (Clostridium botulinum (strain Eklund 17B / Type B)).